Reading from the N-terminus, the 309-residue chain is Anamorsin (309 aa).

Positions 6 to 172 are N-terminal SAM-like domain; that stretch reads ISPGQLVAVF…KPNFEVGSSS (167 aa). The segment at 173–222 is linker; the sequence is QLKLPNKKSSSVKPVVDPAAAKLWTLSANDMEDDSVDLIDSDELLDPEDL. Phosphoserine occurs at positions 182, 183, and 213. Cys235, Cys244, Cys247, and Cys249 together coordinate [2Fe-2S] cluster. Residues 235–249 are fe-S binding site A; it reads CGEGKKRKACKNCTC. Ser269 bears the Phosphoserine mark. [4Fe-4S] cluster-binding residues include Cys271, Cys274, Cys282, and Cys285. 2 short sequence motifs (cx2C motif) span residues 271–274 and 282–285; these read CGNC and CANC. The fe-S binding site B stretch occupies residues 271–285; that stretch reads CGNCYLGDAFRCANC. A phosphoserine mark is found at Ser302 and Ser304.

The protein belongs to the anamorsin family. Monomer. Interacts with NDOR1. Interacts with CHCHD4. [2Fe-2S] cluster serves as cofactor. [4Fe-4S] cluster is required as a cofactor.

The protein localises to the cytoplasm. The protein resides in the nucleus. It is found in the mitochondrion intermembrane space. In terms of biological role, component of the cytosolic iron-sulfur (Fe-S) protein assembly (CIA) machinery required for the maturation of extramitochondrial Fe-S proteins. Part of an electron transfer chain functioning in an early step of cytosolic Fe-S biogenesis, facilitating the de novo assembly of a [4Fe-4S] cluster on the scaffold complex NUBP1-NUBP2. Electrons are transferred to CIAPIN1 from NADPH via the FAD- and FMN-containing protein NDOR1. NDOR1-CIAPIN1 are also required for the assembly of the diferric tyrosyl radical cofactor of ribonucleotide reductase (RNR), probably by providing electrons for reduction during radical cofactor maturation in the catalytic small subunit. Has anti-apoptotic effects in the cell. Involved in negative control of cell death upon cytokine withdrawal. Promotes development of hematopoietic cells. In Mus musculus (Mouse), this protein is Anamorsin.